The sequence spans 416 residues: D-amino acid dehydrogenase (416 aa).

Residue 3–17 participates in FAD binding; the sequence is VIVLGAGIVGVTSAY.

It belongs to the DadA oxidoreductase family. It depends on FAD as a cofactor.

It catalyses the reaction a D-alpha-amino acid + A + H2O = a 2-oxocarboxylate + AH2 + NH4(+). It functions in the pathway amino-acid degradation; D-alanine degradation; NH(3) and pyruvate from D-alanine: step 1/1. In terms of biological role, oxidative deamination of D-amino acids. The chain is D-amino acid dehydrogenase from Rhizobium johnstonii (strain DSM 114642 / LMG 32736 / 3841) (Rhizobium leguminosarum bv. viciae).